A 1377-amino-acid chain; its full sequence is DNA-directed RNA polymerase subunit beta (1377 aa).

It belongs to the RNA polymerase beta chain family. The RNAP catalytic core consists of 2 alpha, 1 beta, 1 beta' and 1 omega subunit. When a sigma factor is associated with the core the holoenzyme is formed, which can initiate transcription.

The enzyme catalyses RNA(n) + a ribonucleoside 5'-triphosphate = RNA(n+1) + diphosphate. DNA-dependent RNA polymerase catalyzes the transcription of DNA into RNA using the four ribonucleoside triphosphates as substrates. The protein is DNA-directed RNA polymerase subunit beta of Cereibacter sphaeroides (strain ATCC 17029 / ATH 2.4.9) (Rhodobacter sphaeroides).